The following is a 284-amino-acid chain: RCS-specific HTH-type transcriptional activator RclR (284 aa).

Cys21 and Cys89 form a disulfide bridge. Residues 177–278 (PRLGAVIQQM…GCTPGEYRER (102 aa)) enclose the HTH araC/xylS-type domain. DNA-binding regions (H-T-H motif) lie at residues 197–218 (ESLA…RDVS) and 245–268 (VVVI…VREF).

Oxydation of Cys-21 leads to partial activation of RclR, followed by the formation of an intramolecular disulfide bond between Cys-21 and Cys-89, which stabilizes the active form of RclR. Involved in reactive chlorine species (RCS) stress resistance. Up-regulates, in response to hypochlorous acid (HOCl), the expression of three genes essential for survival of RCS stress (rclA, rclB and rclC) and its own expression. The protein is RCS-specific HTH-type transcriptional activator RclR (rclR) of Escherichia coli (strain K12).